The primary structure comprises 1614 residues: Protein scribble homolog (1614 aa).

The interval 1–809 (MLKCIPLWRC…MRLWRERMVE (809 aa)) is sufficient for targeting to adherens junction and to inhibit cell proliferation. LRR repeat units follow at residues 11 to 34 (NRHV…IYRY), 35 to 58 (SRSL…FFRL), 59 to 81 (LNLR…VANF), 83 to 105 (QLVE…KFCK), 107 to 127 (LEIA…FTQL), 128 to 150 (RSLA…VGNL), 151 to 173 (ANLV…LSFL), 174 to 196 (VKLE…LGAL), 197 to 219 (PNLR…LGNL), 221 to 242 (RLVC…LGGL), 243 to 265 (LLLT…IGQL), 267 to 288 (QLSI…IGDC), 289 to 311 (ENLS…LGKL), 312 to 334 (TKLT…IGGC), 336 to 357 (ALSV…LAHT), 359 to 380 (ELHV…LTHL), and 382 to 405 (LKAL…DDAQ). Ser-37 is subject to Phosphoserine. Position 378 is a phosphothreonine (Thr-378). Disordered regions lie at residues 417-441 (PQQP…SDAP), 462-608 (GAAA…RLIR), and 636-692 (AQPD…VVSA). A compositionally biased stretch (polar residues) spans 428–437 (GLQSSPSESW). Thr-475 bears the Phosphothreonine mark. The segment covering 479–494 (SELKVMKRGVEERRGE) has biased composition (basic and acidic residues). A compositionally biased stretch (polar residues) spans 516–533 (TESGLSEDSQPSTGTASQ). Residues 548–557 (QQEAAPNAQE) show a composition bias toward low complexity. Positions 662-686 (EEEDEEDEEEDEEEEEVAVAEEDKE) are enriched in acidic residues. Residues 664-691 (EDEEDEEEDEEEEEVAVAEEDKEEAVVS) adopt a coiled-coil conformation. Residues Ser-699 and Ser-755 each carry the phosphoserine modification. Residues 708 to 1219 (IEPARIEEEE…SLESVSSIDR (512 aa)) form an interaction with ARHGEF7 region. Residues 719–806 (TLTIVRQTGG…TVQMRLWRER (88 aa)) enclose the PDZ 1 domain. The interval 719 to 1184 (TLTIVRQTGG…TVLVCDGFDT (466 aa)) is required for interaction with VIM. A Phosphothreonine modification is found at Thr-817. Phosphoserine occurs at positions 826, 866, and 930. Residues 853 to 941 (VACLVRSEKG…TIALLLEREA (89 aa)) enclose the PDZ 2 domain. Residues 940–971 (EAGGPLPPSPLPHSPPPPVTAPSTVVTASPGE) are disordered. Residues 944 to 959 (PLPPSPLPHSPPPPVT) show a composition bias toward pro residues. Low complexity predominate over residues 960–969 (APSTVVTASP). 2 consecutive PDZ domains span residues 994–1083 (EICL…RRDP) and 1090–1178 (ELCI…TVLV). Phosphoserine occurs at positions 1130, 1210, 1213, 1216, 1222, 1260, 1268, and 1271. Residues 1214–1448 (VSSIDRELSP…LPDRALSPAE (235 aa)) are disordered. The segment covering 1217 to 1232 (IDRELSPEGCGKEKEP) has biased composition (basic and acidic residues). Thr-1304 bears the Phosphothreonine mark. Ser-1310 bears the Phosphoserine mark. Residues 1315-1327 (SFRERQKYFELEV) show a composition bias toward basic and acidic residues. Ser-1340 bears the Phosphoserine mark. Positions 1341–1368 (LVGADDLRKMQEEEARKLQQKRAQLMRE) form a coiled coil. The segment covering 1345-1357 (DDLRKMQEEEARK) has biased composition (basic and acidic residues). Residues 1378 to 1390 (LDGEAPDDEEPEE) are compositionally biased toward acidic residues. A compositionally biased stretch (low complexity) spans 1396–1408 (GPAAGLSPSSPQP). A phosphoserine mark is found at Ser-1402 and Ser-1405. The segment covering 1418 to 1429 (AKAERRHQERLR) has biased composition (basic and acidic residues). Ser-1432, Ser-1445, and Ser-1467 each carry phosphoserine. The interval 1476 to 1524 (QMVLSKSQEGRSRRGPLERLAEAPSPAPTPSPTPVEDLGLQTSTSPGRL) is disordered. Positions 1483–1496 (QEGRSRRGPLERLA) are enriched in basic and acidic residues. Residue Ser-1500 is modified to Phosphoserine. Thr-1504 is subject to Phosphothreonine. Phosphoserine is present on residues Ser-1506, Ser-1520, and Ser-1550. Residues 1581–1614 (GRPSPGTVGPEEVTLCSSRRPVRPGRRGLGPVPS) form a disordered region.

Belongs to the LAP (LRR and PDZ) protein family. As to quaternary structure, interacts with UBE3A. Interacts with PAK1 and PAK2. Interacts (via PDZ domains) with VANGL2. Interacts (via PDZ domains) with LPP and TRIP6; the interaction is direct. Interacts (via PDZ domains) with TJP2. Interacts (via PDZ domains) with APC; may mediate APC targeting to adherens junctions of epithelial cells. Interacts (via PDZ domains) with TSHR; regulates TSHR trafficking and function. Interacts with ARHGEF7 and GIT1; interacts directly with ARHGEF7. Interacts with CTNNB1. Interacts with MAPK12. Interacts (via PDZ domains 1 and 3) with MCC. Interacts with DLG5. Interacts with STK4/MST1 and LATS1 in the presence of DLG5. Interacts (via PDZ domain 3) with CRTAM (via PDZ-binding motif); the interaction promotes CRTAM and SCRIB polarization in a subset of CD4+ T-cells. Interacts with YES1, when YES1 is in a closed conformation; the interaction facilitates YES1 autophosphorylation. Interacts (via PDZ domains) with VIM; the interaction protects SCRIB from proteasomal degradation and facilitates SCRIB localization to intermediate filaments, the interaction is reduced by cell contact inhibition. In terms of processing, ubiquitinated; targeted for UBE3A-dependent multiubiquitination and degraded. Palmitoylated. Could be depalmitoylated by LYPLA1 and/or LYPLA2. Palmitoylation of SCRIB by ZDHHC7 is required for its localization to cell-cell junctions, function in the establishement of epithelial cell polarity and the regulation of downstream signaling pathways important for epithelial cell differentiation.

Its subcellular location is the cell membrane. It is found in the cell junction. The protein localises to the adherens junction. It localises to the cell projection. The protein resides in the lamellipodium. Its subcellular location is the cytoplasm. It is found in the postsynapse. The protein localises to the presynapse. Functionally, scaffold protein involved in different aspects of polarized cell differentiation regulating epithelial and neuronal morphogenesis and T-cell polarization. Via its interaction with CRTAM, required for the late phase polarization of a subset of CD4+ T-cells, which in turn regulates TCR-mediated proliferation and IFNG and IL22 production. Plays a role in cell directional movement, cell orientation, cell sheet organization and Golgi complex polarization at the cell migration front. Promotes epithelial cell layer barrier function via maintaining cell-cell adhesion. Most probably functions in the establishment of apico-basal cell polarity. May function in cell proliferation regulating progression from G1 to S phase and as a positive regulator of apoptosis for instance during acinar morphogenesis of the mammary epithelium. May regulate cell invasion via MAPK-mediated cell migration and adhesion. May play a role in exocytosis and in the targeting of synaptic vesicles to synapses. Functions as an activator of Rac GTPase activity. In Canis lupus familiaris (Dog), this protein is Protein scribble homolog.